We begin with the raw amino-acid sequence, 333 residues long: HTH-type transcriptional repressor PurR (333 aa).

In terms of domain architecture, HTH lacI-type spans 2–56 (ATIKDVAKMAGVSTTTVSHVINKTRFVAKETEQQVLQAIKNLNYSPSAVARSLKV). Positions 4–23 (IKDVAKMAGVSTTTVSHVIN) form a DNA-binding region, H-T-H motif. A DNA-binding region spans residues 48-56 (SAVARSLKV). Tyr73, Lys189, Thr191, Phe220, and Asp274 together coordinate hypoxanthine.

As to quaternary structure, homodimer.

Its pathway is purine metabolism; purine nucleotide biosynthesis [regulation]. Is the main repressor of the genes involved in the de novo synthesis of purine nucleotides, regulating purB, purC, purEK, purF, purHD, purL, purMN and guaBA expression. PurR is allosterically activated to bind its cognate DNA by binding the purine corepressors, hypoxanthine or guanine, thereby effecting transcription repression. In Histophilus somni (strain 2336) (Haemophilus somnus), this protein is HTH-type transcriptional repressor PurR.